Reading from the N-terminus, the 264-residue chain is MSGHSKWATTKHKKAAIDAKRGKLFARLIKNIEVAARLGGGDPSGNPTLYDAIQKAKKSSVPNDNITRAVKRGSGEGADAVNYETIMYEAYGPAGVAILIECLTDNRNRAVSDVRVAVTRNGGTMADGGSVQRLFQRKGVVSVSKTYEVEEGRKTETREVDEDQLMEATIDAEPEDIVDEGEVFEIISDPSAVVDVRKAVQGAGIDYDSAEVSFKPDFTQRVELEDARKLYRILDALEDLDDVQNVFSNVDIPAEVAAALDEEE.

This sequence belongs to the TACO1 family.

It localises to the cytoplasm. The chain is Probable transcriptional regulatory protein PPA1157 from Cutibacterium acnes (strain DSM 16379 / KPA171202) (Propionibacterium acnes).